Consider the following 119-residue polypeptide: MRSKFKDEHPFEKRKAEAERIRQKYNDRIPVICEKVEKSDIATIDKKKYLVPADLTVGQFVYVIRKRIKLSPEKAIFIFVDEVLPPTAALMSSIYEEHKDEDGFLYITYSGENTFGEAL.

The Phosphatidylethanolamine amidated glycine moiety is linked to residue Gly116. Residues 117–119 (EAL) constitute a propeptide, removed in mature form.

The protein belongs to the ATG8 family. In terms of assembly, conjugation to phosphatidylethanolamine (PE) leads to homodimerization. Interacts with ATG1, ATG3, ATG4, ATG7 and ATG12. The C-terminal Glu-117, Ala-118 and Leu-119 residues of ATG8 are removed by ATG4 to expose Gly-116 at the C-terminus. This Gly-116 forms then a thioester bond with ATG7 (E1-like activating enzyme) before being transferred to ATG3 (the specific E2 conjugating enzyme), in order to be finally amidated with phosphatidylethanolamine. This lipid modification anchors ATG8 to membranes and can be reversed by ATG4, releasing soluble ATG8.

The protein localises to the cytoplasmic vesicle. It localises to the cvt vesicle membrane. Its subcellular location is the autophagosome membrane. It is found in the vacuole membrane. Its function is as follows. Ubiquitin-like modifier involved in cytoplasm to vacuole transport (Cvt) vesicles and autophagosome formation. With ATG4, mediates the delivery of the vesicles and autophagosomes to the vacuole via the microtubule cytoskeleton. Required for selective autophagic degradation of the nucleus (nucleophagy) as well as for mitophagy which contributes to regulate mitochondrial quantity and quality by eliminating the mitochondria to a basal level to fulfill cellular energy requirements and preventing excess ROS production. Also participates in membrane fusion events that take place in the early secretory pathway. Also involved in endoplasmic reticulum-specific autophagic process and is essential for the survival of cells subjected to severe ER stress. The ATG8-PE conjugate mediates tethering between adjacent membranes and stimulates membrane hemifusion, leading to expansion of the autophagosomal membrane during autophagy. Moreover not only conjugation, but also subsequent ATG8-PE deconjugation is an important step required to facilitate multiple events during macroautophagy, and especially for efficient autophagosome biogenesis, the assembly of ATG9-containing tubulovesicular clusters into phagophores/autophagosomes, and for the disassembly of PAS-associated ATG components. Autophagy is required for conidiation, aerial mycelial growth, and pseudothecia formation, but not for host invasion. The sequence is that of Autophagy-related protein 8 from Cochliobolus heterostrophus (strain C4 / ATCC 48331 / race T) (Southern corn leaf blight fungus).